Here is a 775-residue protein sequence, read N- to C-terminus: Serine/threonine-protein kinase ppk6 (775 aa).

Ser-132 and Ser-134 each carry phosphoserine. The Protein kinase domain occupies 503–758; it reads YTTIKELGIG…IEETLQHHWF (256 aa). Residues 509 to 517 and Lys-533 contribute to the ATP site; that span reads LGIGAYGQV. Catalysis depends on Asp-636, which acts as the Proton acceptor.

This sequence belongs to the protein kinase superfamily. Ser/Thr protein kinase family.

The protein resides in the cytoplasm. It localises to the nucleus. The enzyme catalyses L-seryl-[protein] + ATP = O-phospho-L-seryl-[protein] + ADP + H(+). It carries out the reaction L-threonyl-[protein] + ATP = O-phospho-L-threonyl-[protein] + ADP + H(+). The protein is Serine/threonine-protein kinase ppk6 (ppk6) of Schizosaccharomyces pombe (strain 972 / ATCC 24843) (Fission yeast).